The primary structure comprises 45 residues: Large ribosomal subunit protein bL34 (45 aa).

The protein belongs to the bacterial ribosomal protein bL34 family.

This Acidothermus cellulolyticus (strain ATCC 43068 / DSM 8971 / 11B) protein is Large ribosomal subunit protein bL34.